Reading from the N-terminus, the 272-residue chain is Imidazole glycerol phosphate synthase subunit HisF (272 aa).

Residues D11 and D130 contribute to the active site.

This sequence belongs to the HisA/HisF family. In terms of assembly, heterodimer of HisH and HisF.

The protein resides in the cytoplasm. It catalyses the reaction 5-[(5-phospho-1-deoxy-D-ribulos-1-ylimino)methylamino]-1-(5-phospho-beta-D-ribosyl)imidazole-4-carboxamide + L-glutamine = D-erythro-1-(imidazol-4-yl)glycerol 3-phosphate + 5-amino-1-(5-phospho-beta-D-ribosyl)imidazole-4-carboxamide + L-glutamate + H(+). It participates in amino-acid biosynthesis; L-histidine biosynthesis; L-histidine from 5-phospho-alpha-D-ribose 1-diphosphate: step 5/9. IGPS catalyzes the conversion of PRFAR and glutamine to IGP, AICAR and glutamate. The HisF subunit catalyzes the cyclization activity that produces IGP and AICAR from PRFAR using the ammonia provided by the HisH subunit. This Methanococcus maripaludis (strain C5 / ATCC BAA-1333) protein is Imidazole glycerol phosphate synthase subunit HisF.